The primary structure comprises 260 residues: Adenosylcobinamide-GDP ribazoletransferase (260 aa).

Helical transmembrane passes span 43-63 (LVGT…QFIF), 64-84 (PASV…GGFH), 117-137 (GSLA…ELAL), 143-163 (VAGG…SIIF), 197-217 (VICL…TLFV), and 237-257 (TLGA…LLLW).

It belongs to the CobS family. Mg(2+) serves as cofactor.

It is found in the cell inner membrane. The catalysed reaction is alpha-ribazole + adenosylcob(III)inamide-GDP = adenosylcob(III)alamin + GMP + H(+). It catalyses the reaction alpha-ribazole 5'-phosphate + adenosylcob(III)inamide-GDP = adenosylcob(III)alamin 5'-phosphate + GMP + H(+). It participates in cofactor biosynthesis; adenosylcobalamin biosynthesis; adenosylcobalamin from cob(II)yrinate a,c-diamide: step 7/7. Joins adenosylcobinamide-GDP and alpha-ribazole to generate adenosylcobalamin (Ado-cobalamin). Also synthesizes adenosylcobalamin 5'-phosphate from adenosylcobinamide-GDP and alpha-ribazole 5'-phosphate. The protein is Adenosylcobinamide-GDP ribazoletransferase of Shewanella amazonensis (strain ATCC BAA-1098 / SB2B).